The chain runs to 115 residues: uncharacterized protein (115 aa).

The first 29 residues, 1–29 (MKKAMAILAVLAAAAVICGLLFFHNDVTD), serve as a signal peptide directing secretion.

This is an uncharacterized protein from Bacillus subtilis (strain 168).